The following is a 406-amino-acid chain: MLLDHLKRAAAERDAQSLTRRRRIAHTACAPHQSVGGIDATPTPLLTFCSNDYLGLANHGSIAHALAEGAHRYGAGSGASHLVSGHSLAHAQLERELARWLAPYIPQAQALYFCTGYMANLAVLTSLGATGATLFCESLNHASLIDGARLARADVQRYPHGDAGALDALLAASTTALKLIVTDSVFSMDGDIAPLAALLEVAERHDAWIIVDDAHGFGVLGENGHGVLEHLGLRSERLIYIGTLGKAAGVAGAFVAAHETIVEHLINTARPYIYTTAAPPAVAHALLTSLEIIAGEEGRSRRAHLTGLIAQLRAGLAVLAAQAGWSLGESETAIQPLIVGDNAAALALSAALEAEGIRVGAIRPPTVPAGTARLRITLSASHSAADVARLLETIARAAPQLHKEAA.

Substrate is bound at residue arginine 20. Residue 116 to 117 (GY) coordinates pyridoxal 5'-phosphate. Residue histidine 141 coordinates substrate. Positions 187, 215, and 243 each coordinate pyridoxal 5'-phosphate. Lysine 246 carries the post-translational modification N6-(pyridoxal phosphate)lysine. Position 366 (threonine 366) interacts with substrate.

Belongs to the class-II pyridoxal-phosphate-dependent aminotransferase family. BioF subfamily. In terms of assembly, homodimer. Requires pyridoxal 5'-phosphate as cofactor.

It catalyses the reaction 6-carboxyhexanoyl-[ACP] + L-alanine + H(+) = (8S)-8-amino-7-oxononanoate + holo-[ACP] + CO2. It functions in the pathway cofactor biosynthesis; biotin biosynthesis. Catalyzes the decarboxylative condensation of pimeloyl-[acyl-carrier protein] and L-alanine to produce 8-amino-7-oxononanoate (AON), [acyl-carrier protein], and carbon dioxide. The chain is 8-amino-7-oxononanoate synthase from Cupriavidus metallidurans (strain ATCC 43123 / DSM 2839 / NBRC 102507 / CH34) (Ralstonia metallidurans).